The primary structure comprises 316 residues: BTB/POZ domain-containing protein Y57A10B.3 (316 aa).

Residues 1–21 (MSAMRRCTCFIICLLTSYTYG) form the signal peptide. N-linked (GlcNAc...) asparagine glycosylation is found at asparagine 91, asparagine 107, asparagine 118, asparagine 133, asparagine 191, and asparagine 260. Residues 158-226 (RDAVLIVEGK…VHSTATFPND (69 aa)) form the BTB domain.

Its subcellular location is the secreted. The sequence is that of BTB/POZ domain-containing protein Y57A10B.3 (btb-14) from Caenorhabditis elegans.